Reading from the N-terminus, the 383-residue chain is Schlafen-like protein 3 (383 aa).

An SLFN-like fold region spans residues 118-266 (FDYQSNFSDV…SDKVYQISSG (149 aa)). The chain crosses the membrane as a helical span at residues 354-374 (LLDIQNIGWIFFGTALSFCIY).

This sequence belongs to the Schlafen family. In terms of assembly, component of the PUCH (precursor of 21U RNA 5'-end cleavage holoenzyme) complex; consisting of tofu-1, tofu-2 and either slfl-3 or slfl-4. Within the complex, interacts (via N-terminus) with tofu-2 (via N-terminus); the presence of tofu-1 is required for the interaction.

The protein localises to the mitochondrion membrane. In terms of biological role, component of the trimeric PUCH (precursor of 21U RNA 5'-end cleavage holoenzyme) complex, that acts as an endoribonuclease processing the 5'-end of precursor Piwi-interacting RNAs (piRNAs). The PUCH complex consists of tofu-1, tofu-2 and either slfl-3 or slfl-4, where tofu-2 exhibits endoribonuclease activity. PUCH-mediated processing strictly requires a 7-methyl-G cap (m7 G-cap) and an uracil at position three (U3). PUCH also exhibits a strict bias for piRNA precursors with an A or G at position 1. Mature piRNA production is enhanced by the interaction of PUCH with the PETISCO complex, which is stabilizing piRNA precursors and allows their processing by PUCH. This Caenorhabditis elegans protein is Schlafen-like protein 3.